The chain runs to 388 residues: Chorismate synthase (388 aa).

The NADP(+) site is built by Arg-39 and Arg-45. Residues 130-132 (RSS), 251-252 (NA), Gly-296, 311-315 (KPIPT), and Arg-337 contribute to the FMN site.

Belongs to the chorismate synthase family. In terms of assembly, homotetramer. FMNH2 serves as cofactor.

It catalyses the reaction 5-O-(1-carboxyvinyl)-3-phosphoshikimate = chorismate + phosphate. It functions in the pathway metabolic intermediate biosynthesis; chorismate biosynthesis; chorismate from D-erythrose 4-phosphate and phosphoenolpyruvate: step 7/7. Catalyzes the anti-1,4-elimination of the C-3 phosphate and the C-6 proR hydrogen from 5-enolpyruvylshikimate-3-phosphate (EPSP) to yield chorismate, which is the branch point compound that serves as the starting substrate for the three terminal pathways of aromatic amino acid biosynthesis. This reaction introduces a second double bond into the aromatic ring system. The protein is Chorismate synthase of Streptococcus pyogenes serotype M12 (strain MGAS2096).